Reading from the N-terminus, the 537-residue chain is Arginine--tRNA ligase (537 aa).

The 'HIGH' region motif lies at 113 to 123 (ANPTGRIHLGH).

It belongs to the class-I aminoacyl-tRNA synthetase family. As to quaternary structure, monomer.

The protein resides in the cytoplasm. The catalysed reaction is tRNA(Arg) + L-arginine + ATP = L-arginyl-tRNA(Arg) + AMP + diphosphate. The chain is Arginine--tRNA ligase (argS) from Mycoplasma genitalium (strain ATCC 33530 / DSM 19775 / NCTC 10195 / G37) (Mycoplasmoides genitalium).